The following is a 112-amino-acid chain: Small ribosomal subunit protein bS6 (112 aa).

Belongs to the bacterial ribosomal protein bS6 family.

Binds together with bS18 to 16S ribosomal RNA. The protein is Small ribosomal subunit protein bS6 of Chlamydia trachomatis serovar L2 (strain ATCC VR-902B / DSM 19102 / 434/Bu).